The primary structure comprises 430 residues: Enolase (430 aa).

Q163 lines the (2R)-2-phosphoglycerate pocket. Catalysis depends on E205, which acts as the Proton donor. D242, E287, and D314 together coordinate Mg(2+). (2R)-2-phosphoglycerate is bound by residues K339, R368, S369, and K390. K339 functions as the Proton acceptor in the catalytic mechanism.

Belongs to the enolase family. It depends on Mg(2+) as a cofactor.

The protein localises to the cytoplasm. It is found in the secreted. The protein resides in the cell surface. The enzyme catalyses (2R)-2-phosphoglycerate = phosphoenolpyruvate + H2O. The protein operates within carbohydrate degradation; glycolysis; pyruvate from D-glyceraldehyde 3-phosphate: step 4/5. Its function is as follows. Catalyzes the reversible conversion of 2-phosphoglycerate (2-PG) into phosphoenolpyruvate (PEP). It is essential for the degradation of carbohydrates via glycolysis. The polypeptide is Enolase (Clostridioides difficile (strain 630) (Peptoclostridium difficile)).